A 230-amino-acid chain; its full sequence is Type II restriction enzyme MjaV (230 aa).

The enzyme catalyses Endonucleolytic cleavage of DNA to give specific double-stranded fragments with terminal 5'-phosphates.. In terms of biological role, a P subtype restriction enzyme that recognizes the double-stranded sequence 5'-GTAC-3'; the cleavage site is unknown. The sequence is that of Type II restriction enzyme MjaV (mjaVR) from Methanocaldococcus jannaschii (strain ATCC 43067 / DSM 2661 / JAL-1 / JCM 10045 / NBRC 100440) (Methanococcus jannaschii).